Here is a 95-residue protein sequence, read N- to C-terminus: Pyruvate synthase subunit PorD (95 aa).

4Fe-4S ferredoxin-type domains follow at residues 34–63 (FRPV…PREN) and 64–93 (GFFE…MILE). [4Fe-4S] cluster contacts are provided by Cys43, Cys46, Cys49, Cys53, Cys73, Cys76, Cys79, and Cys83.

As to quaternary structure, heterotetramer of one alpha, one beta, one delta and one gamma chain. It depends on [4Fe-4S] cluster as a cofactor.

The polypeptide is Pyruvate synthase subunit PorD (porD) (Methanosarcina barkeri (strain Fusaro / DSM 804)).